The chain runs to 224 residues: Cytidylate kinase (224 aa).

10–18 (GPSGVGKGT) provides a ligand contact to ATP.

The protein belongs to the cytidylate kinase family. Type 1 subfamily.

Its subcellular location is the cytoplasm. It carries out the reaction CMP + ATP = CDP + ADP. The catalysed reaction is dCMP + ATP = dCDP + ADP. The chain is Cytidylate kinase from Haemophilus ducreyi (strain 35000HP / ATCC 700724).